We begin with the raw amino-acid sequence, 36 residues long: GSGVSNGGTEMIQLSHIRERQRYWAQDNLRRRFLEK.

Lys36 carries the lysine amide modification.

Supra, subesophageal ganglia and segmental ganglia of the ventral nerve cord and brain.

Functionally, may be involved in leech reproduction. The chain is Egg-laying-like hormone from Theromyzon tessulatum (Duck leech).